A 198-amino-acid polypeptide reads, in one-letter code: MSKVLYIKANIKNEGESRTFKVSDSFVEEYKKNNPEDQIITLDLYKENIDFLRADDLGKLFGPKDEESKNNSILKYAYQFADADKYIIAAPMWNLSFPAILKAYIDYVSVSGITFKYTAEGPVGLLNNKKAVHIVSRGGGYDNSPYEMGDRYLRTILGFFGIKDIETIDIDNLDVIGVNVKEKVKEGIEKAISLAKKF.

FMN contacts are provided by residues 92 to 95 and 136 to 139; these read MWNL and SRGG.

This sequence belongs to the azoreductase type 1 family. As to quaternary structure, homodimer. FMN is required as a cofactor.

The enzyme catalyses 2 a quinone + NADH + H(+) = 2 a 1,4-benzosemiquinone + NAD(+). The catalysed reaction is N,N-dimethyl-1,4-phenylenediamine + anthranilate + 2 NAD(+) = 2-(4-dimethylaminophenyl)diazenylbenzoate + 2 NADH + 2 H(+). Quinone reductase that provides resistance to thiol-specific stress caused by electrophilic quinones. Functionally, also exhibits azoreductase activity. Catalyzes the reductive cleavage of the azo bond in aromatic azo compounds to the corresponding amines. The protein is FMN-dependent NADH:quinone oxidoreductase of Clostridium perfringens (strain SM101 / Type A).